Reading from the N-terminus, the 187-residue chain is Calcium and integrin-binding family member 2 (187 aa).

3 EF-hand domains span residues 66-101, 103-138, and 144-179; these read KENPFRNRIVESFSEDGQGNLSFNDFVDMFSVLSEM, PRELKAIYAFKIYDFNVDNYICKEDLEKTLNKLTKE, and EVNLVCEKAIEEADLDGDNKLSFADFENMISRAPDF. Ca(2+) contacts are provided by D157, D159, D161, K163, and D168.

Monomer. Homodimer. Enriched in central and striolar hair cells.

It localises to the cytoplasm. It is found in the cell projection. The protein localises to the stereocilium. Its subcellular location is the photoreceptor inner segment. The protein resides in the cilium. It localises to the photoreceptor outer segment. It is found in the cell membrane. The protein localises to the sarcolemma. In terms of biological role, calcium- and integrin-binding protein. Plays a role in intracellular calcium homeostasis. Critical for proper photoreceptor cell maintenance and function. Essential for development, maintenance and function of mechanosensory hair cells. The chain is Calcium and integrin-binding family member 2 from Danio rerio (Zebrafish).